The chain runs to 184 residues: Large ribosomal subunit protein bL9 (184 aa).

The segment at 160-184 is disordered; the sequence is LQNQKSEQQEAEQDANKEATDGDDS. Residues 173 to 184 show a composition bias toward basic and acidic residues; that stretch reads DANKEATDGDDS.

Belongs to the bacterial ribosomal protein bL9 family.

In terms of biological role, binds to the 23S rRNA. The chain is Large ribosomal subunit protein bL9 from Wolbachia pipientis wMel.